The following is a 446-amino-acid chain: tRNA-2-methylthio-N(6)-dimethylallyladenosine synthase (446 aa).

The MTTase N-terminal domain maps to 3-120 (KKIYIKTFGC…LPEMLKQRRS (118 aa)). Cys-12, Cys-49, Cys-83, Cys-157, Cys-161, and Cys-164 together coordinate [4Fe-4S] cluster. The 233-residue stretch at 143–375 (KVEGATAFVS…QAVIDQNTRR (233 aa)) folds into the Radical SAM core domain. Residues 378 to 444 (DEMVGTVQRI…AYTLRGEIIV (67 aa)) enclose the TRAM domain.

This sequence belongs to the methylthiotransferase family. MiaB subfamily. In terms of assembly, monomer. Requires [4Fe-4S] cluster as cofactor.

Its subcellular location is the cytoplasm. It carries out the reaction N(6)-dimethylallyladenosine(37) in tRNA + (sulfur carrier)-SH + AH2 + 2 S-adenosyl-L-methionine = 2-methylsulfanyl-N(6)-dimethylallyladenosine(37) in tRNA + (sulfur carrier)-H + 5'-deoxyadenosine + L-methionine + A + S-adenosyl-L-homocysteine + 2 H(+). Functionally, catalyzes the methylthiolation of N6-(dimethylallyl)adenosine (i(6)A), leading to the formation of 2-methylthio-N6-(dimethylallyl)adenosine (ms(2)i(6)A) at position 37 in tRNAs that read codons beginning with uridine. The sequence is that of tRNA-2-methylthio-N(6)-dimethylallyladenosine synthase from Janthinobacterium sp. (strain Marseille) (Minibacterium massiliensis).